Reading from the N-terminus, the 254-residue chain is MALQQSMAMPMMVVSDLGTAPRSSPMVQLQRMKKHLVVVAAFKSRTKASPKVDKSNKNKSIVEDGIFGTSGGIGFTKENELFVGRVAMLGFAASLLGEAVTGKGILAQLNLETGIPIYEAEPLLLFFILFTLLGAIGALGDRGRFVDDATGLERAVIPPGKGFRAALGLSEGGPLFGFTKANELFVGRLAQLGIAFSLIGEIITGKGALAQLNIETGVPINEIEPLLLFNILFFFFAAINPGTGKFVTDDNDDQ.

The N-terminal 38 residues, 1–38 (MALQQSMAMPMMVVSDLGTAPRSSPMVQLQRMKKHLVV), are a transit peptide targeting the chloroplast. 2 repeat units span residues 42–148 (FKSR…FVDD) and 149–253 (ATGL…DNDD). 4 helical membrane-spanning segments follow: residues 86-106 (VAML…KGIL), 120-140 (AEPL…GALG), 184-204 (LFVG…EIIT), and 219-239 (PINE…FAAI).

This sequence belongs to the ELIP/psbS family.

The protein resides in the plastid. Its subcellular location is the chloroplast thylakoid membrane. Functionally, involved in high light-mediated energy-dependent nonphotochemical quenching (NPQ, qE) and thermal dissipation (TD) thus regulating energy conversion in photosystem II and protecting from photoinhibition. Also seems to regulate quantum yield of electron transport in fluctuating light conditions. This is Photosystem II 22 kDa protein 2, chloroplastic from Oryza sativa subsp. japonica (Rice).